A 246-amino-acid chain; its full sequence is Bis(5'-nucleosyl)-tetraphosphatase PrpE [asymmetrical] (246 aa).

Belongs to the PrpE family. Requires Ni(2+) as cofactor.

The enzyme catalyses P(1),P(4)-bis(5'-guanosyl) tetraphosphate + H2O = GMP + GTP + 2 H(+). Asymmetrically hydrolyzes Ap4p to yield AMP and ATP. The polypeptide is Bis(5'-nucleosyl)-tetraphosphatase PrpE [asymmetrical] (Bacillus cereus (strain 03BB102)).